Consider the following 675-residue polypeptide: Dihydrolipoyllysine-residue acetyltransferase component of pyruvate dehydrogenase complex (675 aa).

In terms of domain architecture, Lipoyl-binding 1 spans 2–77; it reads AFSVEMPELG…DVGGVIAIIG (76 aa). Lys43 is modified (N6-lipoyllysine). The interval 77–124 is disordered; that stretch reads GDADETPANEAPADEAPAPAEEEEPVKEEPKKEAAPEAPAATGAATDV. Low complexity-rich tracts occupy residues 84-95 and 112-124; these read ANEAPADEAPAP and PEAPAATGAATDV. One can recognise a Lipoyl-binding 2 domain in the interval 121–196; the sequence is ATDVEMPELG…DVGAVIARIG (76 aa). Lys162 is subject to N6-lipoyllysine. Residues 200–240 form a disordered region; that stretch reads AAAAPAEEEAAPAEEEEPVKEEPKKEAAPEAPAATGAATDV. Residues 205–218 show a composition bias toward acidic residues; sequence AEEEAAPAEEEEPV. In terms of domain architecture, Lipoyl-binding 3 spans 237–312; it reads ATDVEMPELG…DVGAVIARIG (76 aa). Lys278 bears the N6-lipoyllysine mark. The disordered stretch occupies residues 316–368; the sequence is AAAAPAEEEAAPAEEEEPVKEEPKKEEPKKEEPKKEAATTPAAASATVSASGD. Residues 321-334 are compositionally biased toward acidic residues; that stretch reads AEEEAAPAEEEEPV. Positions 335–352 are enriched in basic and acidic residues; sequence KEEPKKEEPKKEEPKKEA. The segment covering 353-366 has biased composition (low complexity); that stretch reads ATTPAAASATVSAS. Positions 372–409 constitute a Peripheral subunit-binding (PSBD) domain; the sequence is YVTPLVRKLAEKHGVDLNTVTGTGIGGRIRKQDVLAAA. Catalysis depends on residues His645 and Asp649.

This sequence belongs to the 2-oxoacid dehydrogenase family. As to quaternary structure, forms a 24-polypeptide structural core with octahedral symmetry. Part of an unusual ODH/PDH supercomplex, consisting of AceE (E1), AceF (E2), and Lpd (E3) together with OdhA (E1+E2). Requires (R)-lipoate as cofactor.

It carries out the reaction N(6)-[(R)-dihydrolipoyl]-L-lysyl-[protein] + acetyl-CoA = N(6)-[(R)-S(8)-acetyldihydrolipoyl]-L-lysyl-[protein] + CoA. In terms of biological role, is essential for both 2-oxoglutarate dehydrogenase (ODH) and pyruvate dehydrogenase (PDH) activities, but AceF has exclusively transacetylase (and no transsuccinylase) activity. The lipoyl residues required for ODH activity are likely provided by AceF. This chain is Dihydrolipoyllysine-residue acetyltransferase component of pyruvate dehydrogenase complex (aceF), found in Corynebacterium glutamicum (strain ATCC 13032 / DSM 20300 / JCM 1318 / BCRC 11384 / CCUG 27702 / LMG 3730 / NBRC 12168 / NCIMB 10025 / NRRL B-2784 / 534).